Here is a 298-residue protein sequence, read N- to C-terminus: Foldase protein PrsA 1 (298 aa).

A signal peptide spans 1–19; that stretch reads MKKWLIALAGVLLTFTLAG. Cys-20 is lipidated: N-palmitoyl cysteine. Cys-20 carries S-diacylglycerol cysteine lipidation. A PpiC domain is found at 136 to 232; the sequence is EPKVTVQHIL…NGYEIIRMIK (97 aa).

Belongs to the PrsA family.

It localises to the cell membrane. It carries out the reaction [protein]-peptidylproline (omega=180) = [protein]-peptidylproline (omega=0). In terms of biological role, plays a major role in protein secretion by helping the post-translocational extracellular folding of several secreted proteins. This Lactiplantibacillus plantarum (strain ATCC BAA-793 / NCIMB 8826 / WCFS1) (Lactobacillus plantarum) protein is Foldase protein PrsA 1 (prsA1).